The following is a 541-amino-acid chain: Carotenoid-cleaving dioxygenase, mitochondrial (541 aa).

His-188, His-248, His-319, and His-535 together coordinate Fe cation.

Belongs to the carotenoid oxygenase family. Fe(2+) is required as a cofactor. Widely expressed. Detected in heart, spleen, lung, intestine, colon, stomach, kidney, bladder, and prostate. Highly expressed in liver and testis (at protein level).

It is found in the mitochondrion. It carries out the reaction all-trans-beta-carotene + O2 = beta-ionone + all-trans-10'-apo-beta-carotenal. The catalysed reaction is 5-cis-lycopene + O2 = 5-cis-10'-apo-lycopenal + (3E,5E)-6,10-dimethylundeca-3,5,9-trien-2-one. It catalyses the reaction 13-cis-lycopene + O2 = 13-cis-10'-apo-lycopenal + (3E,5E)-6,10-dimethylundeca-3,5,9-trien-2-one. The enzyme catalyses lutein + O2 = (3R,6R)-hydroxy-alpha-ionone + (3R)-3-hydroxy-10'-apo-beta-carotenal. It carries out the reaction lutein + O2 = (3R,6R)-3-hydroxy-10'-apo-alpha-carotenal + (3R)-hydroxy-beta-ionone. The catalysed reaction is all-trans-zeaxanthin + 2 O2 = 4,9-dimethyldodeca-2,4,6,8,10-pentaenedial + 2 (3R)-hydroxy-beta-ionone. It catalyses the reaction all-trans-zeaxanthin + O2 = (3R)-3-hydroxy-10'-apo-beta-carotenal + (3R)-hydroxy-beta-ionone. The enzyme catalyses beta-cryptoxanthin + O2 = all-trans-10'-apo-beta-carotenal + (3R)-hydroxy-beta-ionone. It carries out the reaction all-trans-10'-apo-beta-carotenal + O2 = beta-ionone + 4,9-dimethyldodeca-2,4,6,8,10-pentaenedial. The catalysed reaction is (3R)-3-hydroxy-10'-apo-beta-carotenal + O2 = 4,9-dimethyldodeca-2,4,6,8,10-pentaenedial + (3R)-hydroxy-beta-ionone. It catalyses the reaction (3R,6R)-3-hydroxy-10'-apo-alpha-carotenal + O2 = (3R,6R)-hydroxy-alpha-ionone + 4,9-dimethyldodeca-2,4,6,8,10-pentaenedial. Broad specificity mitochondrial dioxygenase that mediates the asymmetric oxidative cleavage of carotenoids. Cleaves carotenes (pure hydrocarbon carotenoids) such as all-trans-beta-carotene and lycopene as well as xanthophylls (oxygenated carotenoids) such as zeaxanthin, lutein and beta-cryptoxanthin at both the 9,10 and the 9',10' carbon-carbon double bond. Through its function in carotenoids metabolism regulates oxidative stress and the production of important signaling molecules. The protein is Carotenoid-cleaving dioxygenase, mitochondrial of Mustela putorius furo (European domestic ferret).